A 139-amino-acid chain; its full sequence is Acidic phospholipase A2 Ts-A4 (139 aa).

An N-terminal signal peptide occupies residues 1–16 (MRTLWILAVLLVGVEG). 7 disulfide bridges follow: Cys42-Cys132, Cys44-Cys60, Cys59-Cys111, Cys65-Cys139, Cys66-Cys104, Cys73-Cys97, and Cys91-Cys102. Tyr43, Gly45, and Gly47 together coordinate Ca(2+). His63 is an active-site residue. Residue Asp64 participates in Ca(2+) binding. Residue Asp105 is part of the active site.

It depends on Ca(2+) as a cofactor. In terms of tissue distribution, expressed by the venom gland.

It localises to the secreted. The catalysed reaction is a 1,2-diacyl-sn-glycero-3-phosphocholine + H2O = a 1-acyl-sn-glycero-3-phosphocholine + a fatty acid + H(+). In terms of biological role, PLA2 catalyzes the calcium-dependent hydrolysis of the 2-acyl groups in 3-sn-phosphoglycerides. The protein is Acidic phospholipase A2 Ts-A4 of Trimeresurus stejnegeri (Chinese green tree viper).